We begin with the raw amino-acid sequence, 302 residues long: Sulfate adenylyltransferase subunit 2 (302 aa).

Belongs to the PAPS reductase family. CysD subfamily. Heterodimer composed of CysD, the smaller subunit, and CysN.

It carries out the reaction sulfate + ATP + H(+) = adenosine 5'-phosphosulfate + diphosphate. Its pathway is sulfur metabolism; hydrogen sulfide biosynthesis; sulfite from sulfate: step 1/3. Functionally, with CysN forms the ATP sulfurylase (ATPS) that catalyzes the adenylation of sulfate producing adenosine 5'-phosphosulfate (APS) and diphosphate, the first enzymatic step in sulfur assimilation pathway. APS synthesis involves the formation of a high-energy phosphoric-sulfuric acid anhydride bond driven by GTP hydrolysis by CysN coupled to ATP hydrolysis by CysD. The polypeptide is Sulfate adenylyltransferase subunit 2 (Enterobacter sp. (strain 638)).